The chain runs to 318 residues: Mediator of RNA polymerase II transcription subunit 3 (318 aa).

Residues 134 to 156 (SAAGITKTSSGNDGNTTGSTANT) show a composition bias toward polar residues. The interval 134 to 225 (SAAGITKTSS…PSLKQIPNTQ (92 aa)) is disordered. Residues 192–217 (HTGPATAPTTSNSAASAAAAAANTPS) are compositionally biased toward low complexity.

Belongs to the Mediator complex subunit 3 family. In terms of assembly, component of the Mediator complex.

Its subcellular location is the nucleus. Its function is as follows. Component of the Mediator complex, a coactivator involved in regulated gene transcription of nearly all RNA polymerase II-dependent genes. Mediator functions as a bridge to convey information from gene-specific regulatory proteins to the basal RNA polymerase II transcription machinery. Mediator is recruited to promoters by direct interactions with regulatory proteins and serves as a scaffold for the assembly of a functional preinitiation complex with RNA polymerase II and the general transcription factors. The sequence is that of Mediator of RNA polymerase II transcription subunit 3 (PGD1) from Kluyveromyces lactis (strain ATCC 8585 / CBS 2359 / DSM 70799 / NBRC 1267 / NRRL Y-1140 / WM37) (Yeast).